We begin with the raw amino-acid sequence, 302 residues long: Coenzyme PQQ synthesis protein B (302 aa).

This sequence belongs to the PqqB family.

Its pathway is cofactor biosynthesis; pyrroloquinoline quinone biosynthesis. Its function is as follows. May be involved in the transport of PQQ or its precursor to the periplasm. The chain is Coenzyme PQQ synthesis protein B from Azotobacter vinelandii (strain DJ / ATCC BAA-1303).